The chain runs to 196 residues: Probable GTP-binding protein EngB (196 aa).

The 175-residue stretch at 22 to 196 folds into the EngB-type G domain; that stretch reads NLPEIALSGR…GNWIEEKISK (175 aa). GTP contacts are provided by residues 30–37, 57–61, 75–78, 142–145, and 175–177; these read GRSNVGKS, GKTQT, DVPG, TKID, and FSS. Mg(2+)-binding residues include serine 37 and threonine 59.

This sequence belongs to the TRAFAC class TrmE-Era-EngA-EngB-Septin-like GTPase superfamily. EngB GTPase family. Mg(2+) serves as cofactor.

Its function is as follows. Necessary for normal cell division and for the maintenance of normal septation. The chain is Probable GTP-binding protein EngB from Lactobacillus helveticus (strain DPC 4571).